The following is a 189-amino-acid chain: Interferon alpha-10 (189 aa).

A signal peptide spans 1-23 (MALSFSLLMAVLVLSYKSICSLG). Disulfide bonds link cysteine 24/cysteine 122 and cysteine 52/cysteine 162.

It belongs to the alpha/beta interferon family.

The protein localises to the secreted. Its function is as follows. Produced by macrophages, IFN-alpha have antiviral activities. Interferon stimulates the production of two enzymes: a protein kinase and an oligoadenylate synthetase. This chain is Interferon alpha-10 (IFNA10), found in Homo sapiens (Human).